Consider the following 143-residue polypeptide: Large ribosomal subunit protein uL11 (143 aa).

The protein belongs to the universal ribosomal protein uL11 family. In terms of assembly, part of the ribosomal stalk of the 50S ribosomal subunit. Interacts with L10 and the large rRNA to form the base of the stalk. L10 forms an elongated spine to which L12 dimers bind in a sequential fashion forming a multimeric L10(L12)X complex. In terms of processing, one or more lysine residues are methylated.

In terms of biological role, forms part of the ribosomal stalk which helps the ribosome interact with GTP-bound translation factors. The sequence is that of Large ribosomal subunit protein uL11 from Ectopseudomonas mendocina (strain ymp) (Pseudomonas mendocina).